Consider the following 94-residue polypeptide: MAAKILALWLLLAGTVFPQGCCQHWSYGLSPGGKRDLDNFSDTLGNMVEEFPRVEAPCSVFGCAEESPFAKMYRVKGLLASVAERENGHRTFKK.

The N-terminal stretch at 1–22 is a signal peptide; it reads MAAKILALWLLLAGTVFPQGCC. Position 23 is a pyrrolidone carboxylic acid (glutamine 23). Glycine 32 carries the glycine amide modification.

Belongs to the GnRH family. Synthesized in preoptic neurons and is transported to the pituitary in the preoptic-hypophyseal axons.

The protein resides in the secreted. Its function is as follows. Stimulates the secretion of gonadotropins. May be responsible for the regulation of the hypothalamic-pituitary-gonadal axis. The protein is Progonadoliberin-1 (gnrh1) of Haplochromis burtoni (Burton's mouthbrooder).